The sequence spans 191 residues: Transcriptional activator GvpE1 (191 aa).

The disordered stretch occupies residues 31-51 (SDGASDHADQPPDEGATQRYT). 140–145 (KRKVYR) contributes to the DNA binding site. The leucine-zipper stretch occupies residues 150–181 (EGAFTRIDHMVDQLLLFSLVLKAVMTDCKARQ).

As to quaternary structure, interacts with GvpD.

It localises to the cytoplasm. Its activity is regulated as follows. The amount of protein that accumulates is controlled by GvpD; GvpD causes a reduction in the amount of GvpE, preventing accumulation of excessive amounts of gas vesicles. Functionally, plays a regulatory role in gas vesicle synthesis, activates transcription of the gvpA operon, and probably of the gvpD operon. Gas vesicles are hollow, gas filled proteinaceous nanostructures found in several microbial planktonic microorganisms. They allow positioning of halobacteria at the optimal depth for growth in the poorly aerated, shallow brine pools of their habitat. Expression of a 9.5 kb p-vac DNA fragment containing 2 divergently transcribed regions (gvpD-gvpE-gvpF-gvpG-gvpH-gvpI-gvpJ-gvpK-gvpL-gvpM and gvpA-gvpC-gvpN-gvpO) allows H.volcanii to produce gas vesicles. A similar region restores gas vesicle production in H.halobium without the p-vac locus, but it still has the c-vac locus. The protein is Transcriptional activator GvpE1 (gvpE11) of Halobacterium salinarum (strain ATCC 700922 / JCM 11081 / NRC-1) (Halobacterium halobium).